The primary structure comprises 61 residues: Cecropin-D (61 aa).

Positions 1–22 (MKFSKIFVFVFAIVFATASVSA) are cleaved as a signal peptide. Residues 23–24 (AP) constitute a propeptide, removed by a dipeptidylpeptidase. Glutamine 60 carries the glutamine amide modification.

The protein belongs to the cecropin family. Mainly in fat body. Lower in hemocytes. Not expressed in midguts, malpighian tubules and silk glands.

It is found in the secreted. Functionally, cecropins have lytic and antibacterial activity against several Gram-positive and Gram-negative bacteria. In Bombyx mori (Silk moth), this protein is Cecropin-D (CECD).